The primary structure comprises 162 residues: Small ribosomal subunit protein uS9 (162 aa).

The protein belongs to the universal ribosomal protein uS9 family.

The chain is Small ribosomal subunit protein uS9 from Methylobacterium sp. (strain 4-46).